The following is a 269-amino-acid chain: Phosphate import ATP-binding protein PstB 1 (269 aa).

In terms of domain architecture, ABC transporter spans 23–264; the sequence is LSTEDLNVYY…PKIKAAEDYV (242 aa). 55–62 lines the ATP pocket; it reads GASGSGKS.

This sequence belongs to the ABC transporter superfamily. Phosphate importer (TC 3.A.1.7) family. In terms of assembly, the complex is composed of two ATP-binding proteins (PstB), two transmembrane proteins (PstC and PstA) and a solute-binding protein (PstS).

It localises to the cell membrane. The enzyme catalyses phosphate(out) + ATP + H2O = ADP + 2 phosphate(in) + H(+). In terms of biological role, part of the ABC transporter complex PstSACB involved in phosphate import. Responsible for energy coupling to the transport system. The sequence is that of Phosphate import ATP-binding protein PstB 1 from Latilactobacillus sakei subsp. sakei (strain 23K) (Lactobacillus sakei subsp. sakei).